We begin with the raw amino-acid sequence, 274 residues long: Protein STAY-GREEN, chloroplastic (274 aa).

Residues 1–48 constitute a chloroplast transit peptide; the sequence is MAAATSTMSLIPPITQQQRWHAADSLVVLASRRHDSRRRRRCRYVVPR.

Belongs to the staygreen family.

The protein localises to the plastid. Its subcellular location is the chloroplast. Involved in the disassembling mechanism of the intact light-harvesting complex of photosystem II (LHCPII) in the thylakoid membranes. Required to trigger chlorophyll degradation during natural and dark-induced leaf senescence. The polypeptide is Protein STAY-GREEN, chloroplastic (SGR) (Oryza sativa subsp. indica (Rice)).